A 354-amino-acid chain; its full sequence is Peptide chain release factor 1 (354 aa).

Position 230 is an N5-methylglutamine (Gln230).

The protein belongs to the prokaryotic/mitochondrial release factor family. Methylated by PrmC. Methylation increases the termination efficiency of RF1.

The protein localises to the cytoplasm. Its function is as follows. Peptide chain release factor 1 directs the termination of translation in response to the peptide chain termination codons UAG and UAA. This Pelobacter propionicus (strain DSM 2379 / NBRC 103807 / OttBd1) protein is Peptide chain release factor 1.